The following is a 65-amino-acid chain: Large ribosomal subunit protein bL35 (65 aa).

The tract at residues 1 to 26 is disordered; sequence MPKMKTNKSAQKRFKKTGSGRFKCKQ. Over residues 10 to 26 the composition is skewed to basic residues; sequence AQKRFKKTGSGRFKCKQ.

The protein belongs to the bacterial ribosomal protein bL35 family.

This Hydrogenovibrio crunogenus (strain DSM 25203 / XCL-2) (Thiomicrospira crunogena) protein is Large ribosomal subunit protein bL35.